The primary structure comprises 336 residues: Galectin-12 (336 aa).

Galectin domains are found at residues 49 to 183 (YVTT…VGFL) and 212 to 336 (CSHA…CVHS).

As to expression, not widely expressed. Predominantly expressed in adipose tissue.

The protein resides in the nucleus. Functionally, binds lactose. May participate in the apoptosis of adipocytes. This Homo sapiens (Human) protein is Galectin-12 (LGALS12).